Reading from the N-terminus, the 59-residue chain is Cytochrome c oxidase subunit 7 (59 aa).

The Mitochondrial matrix segment spans residues 1-24 (MKNTIVQQQRFLQSIHKPTYLQRP). The helical transmembrane segment at 25–47 (GSFALVYPYYAVMAGLGLYSLYA) threads the bilayer. At 48-59 (SGRVIFGKKDAF) the chain is on the mitochondrial intermembrane side.

The protein belongs to the cytochrome c oxidase subunit 7 family. As to quaternary structure, component of the cytochrome c oxidase (complex IV, CIV), a multisubunit enzyme composed of a catalytic core of 3 subunits and several supernumerary subunits. The complex exists as a monomer or a dimer and forms supercomplexes (SCs) in the inner mitochondrial membrane with ubiquinol-cytochrome c oxidoreductase (cytochrome b-c1 complex, complex III, CIII).

It is found in the mitochondrion inner membrane. The protein operates within energy metabolism; oxidative phosphorylation. Functionally, component of the cytochrome c oxidase, the last enzyme in the mitochondrial electron transport chain which drives oxidative phosphorylation. The respiratory chain contains 3 multisubunit complexes succinate dehydrogenase (complex II, CII), ubiquinol-cytochrome c oxidoreductase (cytochrome b-c1 complex, complex III, CIII) and cytochrome c oxidase (complex IV, CIV), that cooperate to transfer electrons derived from NADH and succinate to molecular oxygen, creating an electrochemical gradient over the inner membrane that drives transmembrane transport and the ATP synthase. Cytochrome c oxidase is the component of the respiratory chain that catalyzes the reduction of oxygen to water. Electrons originating from reduced cytochrome c in the intermembrane space (IMS) are transferred via the dinuclear copper A center (CU(A)) of subunit 2 and heme A of subunit 1 to the active site in subunit 1, a binuclear center (BNC) formed by heme A3 and copper B (CU(B)). The BNC reduces molecular oxygen to 2 water molecules using 4 electrons from cytochrome c in the IMS and 4 protons from the mitochondrial matrix. This Schizosaccharomyces pombe (strain 972 / ATCC 24843) (Fission yeast) protein is Cytochrome c oxidase subunit 7 (cox7).